A 438-amino-acid polypeptide reads, in one-letter code: UDP-N-acetylmuramoylalanine--D-glutamate ligase (438 aa).

Residue 112–118 (GSNGKST) participates in ATP binding.

This sequence belongs to the MurCDEF family.

It localises to the cytoplasm. The catalysed reaction is UDP-N-acetyl-alpha-D-muramoyl-L-alanine + D-glutamate + ATP = UDP-N-acetyl-alpha-D-muramoyl-L-alanyl-D-glutamate + ADP + phosphate + H(+). It functions in the pathway cell wall biogenesis; peptidoglycan biosynthesis. In terms of biological role, cell wall formation. Catalyzes the addition of glutamate to the nucleotide precursor UDP-N-acetylmuramoyl-L-alanine (UMA). The protein is UDP-N-acetylmuramoylalanine--D-glutamate ligase (murD) of Escherichia coli O6:H1 (strain CFT073 / ATCC 700928 / UPEC).